The following is a 145-amino-acid chain: D-aminoacyl-tRNA deacylase (145 aa).

A Gly-cisPro motif, important for rejection of L-amino acids motif is present at residues 137–138 (GP).

This sequence belongs to the DTD family. Homodimer.

The protein localises to the cytoplasm. It carries out the reaction glycyl-tRNA(Ala) + H2O = tRNA(Ala) + glycine + H(+). The enzyme catalyses a D-aminoacyl-tRNA + H2O = a tRNA + a D-alpha-amino acid + H(+). An aminoacyl-tRNA editing enzyme that deacylates mischarged D-aminoacyl-tRNAs. Also deacylates mischarged glycyl-tRNA(Ala), protecting cells against glycine mischarging by AlaRS. Acts via tRNA-based rather than protein-based catalysis; rejects L-amino acids rather than detecting D-amino acids in the active site. By recycling D-aminoacyl-tRNA to D-amino acids and free tRNA molecules, this enzyme counteracts the toxicity associated with the formation of D-aminoacyl-tRNA entities in vivo and helps enforce protein L-homochirality. The protein is D-aminoacyl-tRNA deacylase of Saccharophagus degradans (strain 2-40 / ATCC 43961 / DSM 17024).